We begin with the raw amino-acid sequence, 219 residues long: Proteasome subunit beta type-9 (219 aa).

The propeptide at methionine 1–glycine 20 is removed in mature form. Threonine 21 (nucleophile) is an active-site residue. Residues lysine 53 and lysine 109 each carry the N6-acetyllysine modification.

It belongs to the peptidase T1B family. In terms of assembly, the 26S proteasome consists of a 20S proteasome core and two 19S regulatory subunits. The 20S proteasome core is composed of 28 subunits that are arranged in four stacked rings, resulting in a barrel-shaped structure. The two end rings are each formed by seven alpha subunits, and the two central rings are each formed by seven beta subunits. The catalytic chamber with the active sites is on the inside of the barrel. Component of the immunoproteasome, where it displaces the equivalent housekeeping subunit PSMB6. Component of the spermatoproteasome, a form of the proteasome specifically found in testis. Autocleaved. The resulting N-terminal Thr residue of the mature subunit is responsible for the nucleophile proteolytic activity.

It is found in the cytoplasm. The protein localises to the nucleus. The enzyme catalyses Cleavage of peptide bonds with very broad specificity.. Functionally, the proteasome is a multicatalytic proteinase complex which is characterized by its ability to cleave peptides with Arg, Phe, Tyr, Leu, and Glu adjacent to the leaving group at neutral or slightly basic pH. The proteasome has an ATP-dependent proteolytic activity. This subunit is involved in antigen processing to generate class I binding peptides. The chain is Proteasome subunit beta type-9 (Psmb9) from Mus terricolor (Earth-colored mouse).